We begin with the raw amino-acid sequence, 162 residues long: Regulatory protein RecX (162 aa).

It belongs to the RecX family.

It localises to the cytoplasm. Functionally, modulates RecA activity. This Xanthomonas campestris pv. campestris (strain 8004) protein is Regulatory protein RecX.